Reading from the N-terminus, the 428-residue chain is Enolase (428 aa).

A (2R)-2-phosphoglycerate-binding site is contributed by Gln-163. Residue Glu-205 is the Proton donor of the active site. Positions 242, 286, and 313 each coordinate Mg(2+). (2R)-2-phosphoglycerate-binding residues include Lys-338, Arg-367, Ser-368, and Lys-389. The active-site Proton acceptor is Lys-338.

Belongs to the enolase family. Mg(2+) serves as cofactor.

The protein resides in the cytoplasm. The protein localises to the secreted. It is found in the cell surface. The enzyme catalyses (2R)-2-phosphoglycerate = phosphoenolpyruvate + H2O. It functions in the pathway carbohydrate degradation; glycolysis; pyruvate from D-glyceraldehyde 3-phosphate: step 4/5. Catalyzes the reversible conversion of 2-phosphoglycerate (2-PG) into phosphoenolpyruvate (PEP). It is essential for the degradation of carbohydrates via glycolysis. This chain is Enolase, found in Bordetella petrii (strain ATCC BAA-461 / DSM 12804 / CCUG 43448).